Consider the following 464-residue polypeptide: Cysteine--tRNA ligase (464 aa).

Cysteine 27 contacts Zn(2+). A 'HIGH' region motif is present at residues 29–39 (PTVYDDAHLGH). Zn(2+) contacts are provided by cysteine 203, histidine 234, and glutamate 238. The 'KMSKS' region signature appears at 266 to 270 (KMSKS). ATP is bound at residue lysine 269.

It belongs to the class-I aminoacyl-tRNA synthetase family. Monomer. It depends on Zn(2+) as a cofactor.

Its subcellular location is the cytoplasm. The enzyme catalyses tRNA(Cys) + L-cysteine + ATP = L-cysteinyl-tRNA(Cys) + AMP + diphosphate. The polypeptide is Cysteine--tRNA ligase (Campylobacter concisus (strain 13826)).